Here is a 623-residue protein sequence, read N- to C-terminus: Glutathione import ATP-binding protein GsiA (623 aa).

2 consecutive ABC transporter domains span residues 15–269 (VENL…RALL) and 314–564 (LRVR…RKLL). ATP is bound by residues 49-56 (GESGSGKS) and 357-364 (GESGSGKS).

The protein belongs to the ABC transporter superfamily. Glutathione importer (TC 3.A.1.5.11) family. The complex is composed of two ATP-binding proteins (GsiA), two transmembrane proteins (GsiC and GsiD) and a solute-binding protein (GsiB).

Its subcellular location is the cell inner membrane. The catalysed reaction is glutathione(out) + ATP + H2O = glutathione(in) + ADP + phosphate + H(+). Functionally, part of the ABC transporter complex GsiABCD involved in glutathione import. Responsible for energy coupling to the transport system. This Shigella boydii serotype 4 (strain Sb227) protein is Glutathione import ATP-binding protein GsiA.